We begin with the raw amino-acid sequence, 569 residues long: Protein GPR108 (569 aa).

The first 34 residues, 1–34 (MAVSERRGLSGESPTQCRWGYLSLLVLTLSGCSG), serve as a signal peptide directing secretion. N-linked (GlcNAc...) asparagine glycans are attached at residues asparagine 59, asparagine 111, and asparagine 182. Positions 144–219 (LLPEAPTQSG…DPSGKEKDQV (76 aa)) are disordered. Positions 180 to 192 (KENQTAPQVSGDK) are enriched in polar residues. Residues 194-203 (TPGEHRHSSE) are compositionally biased toward basic and acidic residues. N-linked (GlcNAc...) asparagine glycans are attached at residues asparagine 226 and asparagine 230. 7 helical membrane passes run 289-309 (LYLIMSACFLAADIFWVSVLC), 318-338 (IHWLMAALAFTKSVSLLFHSI), 362-382 (LLKGALLFITIALIGSGWAFV), 393-413 (IFGIVIPLQVLANVAYIVIES), 427-447 (ILFLVDLICCGAILFPVVWSI), 475-495 (VMVICYIYFTRIIAILLQVAV), and 499-519 (WQWLYQLLVESSTLAFFVLTG).

Belongs to the LU7TM family. In terms of tissue distribution, high expression in spleen, lung, stomach, large and small intestine, and thymus.

Its subcellular location is the golgi apparatus. It is found in the cis-Golgi network membrane. It localises to the trans-Golgi network membrane. The protein resides in the golgi apparatus membrane. Functionally, may play a role in intracellular immune modulation by activating NF-kappaB response and attenuating Toll-like-receptor response. Its function is as follows. (Microbial infection) Plays an essential function in adeno-associated virus (AAV) transduction, across multiple serotypes except AAV5. May play a critical role in mediating the endosomal virus escape or in the AAV virions trafficking from endosomes to the nucleus. The chain is Protein GPR108 (Gpr108) from Mus musculus (Mouse).